The primary structure comprises 275 residues: Cell division protein FtsQ (275 aa).

The disordered stretch occupies residues 1-20 (MRDLHKKKPRPVTQNRLKKP). Over 1–38 (MRDLHKKKPRPVTQNRLKKPPKTCKPINYRGILKKTAK) the chain is Cytoplasmic. A helical membrane pass occupies residues 39–61 (VVGGAALISAVGCAGYGIYRIIA). Over 62–275 (GTTFFKLERI…YSDKIIVKKV (214 aa)) the chain is Periplasmic. The POTRA domain maps to 66-134 (FKLERIEVSE…NTLSMQIAER (69 aa)).

Belongs to the FtsQ/DivIB family. FtsQ subfamily.

The protein resides in the cell inner membrane. Essential cell division protein. This Geotalea daltonii (strain DSM 22248 / JCM 15807 / FRC-32) (Geobacter daltonii) protein is Cell division protein FtsQ.